A 239-amino-acid polypeptide reads, in one-letter code: 1-(5-phosphoribosyl)-5-[(5-phosphoribosylamino)methylideneamino] imidazole-4-carboxamide isomerase (239 aa).

The active-site Proton acceptor is the Asp8. The active-site Proton donor is Asp129.

Belongs to the HisA/HisF family.

The protein resides in the cytoplasm. It carries out the reaction 1-(5-phospho-beta-D-ribosyl)-5-[(5-phospho-beta-D-ribosylamino)methylideneamino]imidazole-4-carboxamide = 5-[(5-phospho-1-deoxy-D-ribulos-1-ylimino)methylamino]-1-(5-phospho-beta-D-ribosyl)imidazole-4-carboxamide. It participates in amino-acid biosynthesis; L-histidine biosynthesis; L-histidine from 5-phospho-alpha-D-ribose 1-diphosphate: step 4/9. This chain is 1-(5-phosphoribosyl)-5-[(5-phosphoribosylamino)methylideneamino] imidazole-4-carboxamide isomerase, found in Cereibacter sphaeroides (strain ATCC 17025 / ATH 2.4.3) (Rhodobacter sphaeroides).